The following is a 388-amino-acid chain: Chaperone protein DnaJ (388 aa).

The region spanning 5–70 (DYYEVLGVAR…QKRAAYDRFG (66 aa)) is the J domain. Residues 141–219 (GKTETIRLPT…CGGAGRVTRE (79 aa)) form a CR-type zinc finger. The Zn(2+) site is built by Cys154, Cys157, Cys171, Cys174, Cys193, Cys196, Cys207, and Cys210. CXXCXGXG motif repeat units lie at residues 154–161 (CEVCAGSG), 171–178 (CPTCGGYG), 193–200 (CPNCHGRG), and 207–214 (CTACGGAG).

Belongs to the DnaJ family. In terms of assembly, homodimer. Zn(2+) serves as cofactor.

The protein localises to the cytoplasm. Participates actively in the response to hyperosmotic and heat shock by preventing the aggregation of stress-denatured proteins and by disaggregating proteins, also in an autonomous, DnaK-independent fashion. Unfolded proteins bind initially to DnaJ; upon interaction with the DnaJ-bound protein, DnaK hydrolyzes its bound ATP, resulting in the formation of a stable complex. GrpE releases ADP from DnaK; ATP binding to DnaK triggers the release of the substrate protein, thus completing the reaction cycle. Several rounds of ATP-dependent interactions between DnaJ, DnaK and GrpE are required for fully efficient folding. Also involved, together with DnaK and GrpE, in the DNA replication of plasmids through activation of initiation proteins. This chain is Chaperone protein DnaJ, found in Methylobacterium nodulans (strain LMG 21967 / CNCM I-2342 / ORS 2060).